Consider the following 245-residue polypeptide: AA9 family lytic polysaccharide monooxygenase B (245 aa).

The signal sequence occupies residues 1-18 (MKSAIFAAAVLGAAGVSA). Residues H19 and H105 each contribute to the Cu(2+) site. C116 and C120 are joined by a disulfide. H179 and Q188 together coordinate O2. Residue Y190 coordinates Cu(2+).

The protein belongs to the polysaccharide monooxygenase AA9 family. Cu(2+) is required as a cofactor.

The protein localises to the secreted. It catalyses the reaction [(1-&gt;4)-beta-D-glucosyl]n+m + reduced acceptor + O2 = 4-dehydro-beta-D-glucosyl-[(1-&gt;4)-beta-D-glucosyl]n-1 + [(1-&gt;4)-beta-D-glucosyl]m + acceptor + H2O.. Its function is as follows. Lytic polysaccharide monooxygenase (LPMO) that depolymerizes crystalline and amorphous polysaccharides via the oxidation of scissile alpha- or beta-(1-4)-glycosidic bonds, yielding C1 or C4 oxidation products. Catalysis by LPMOs requires the reduction of the active-site copper from Cu(II) to Cu(I) by a reducing agent and H(2)O(2) or O(2) as a cosubstrate. Active on hemicelluloses, including xylan, glucomannan, and xyloglucan. Has no activity on ivory nut mannan (INM), a linear beta-1,4-linked mannan without substitutions. The sequence is that of AA9 family lytic polysaccharide monooxygenase B from Malbranchea cinnamomea (Thermophilic fungus).